Consider the following 465-residue polypeptide: Iron-sulfur cluster assembly SufBD family protein SH2035 (465 aa).

The protein belongs to the iron-sulfur cluster assembly SufBD family.

This is Iron-sulfur cluster assembly SufBD family protein SH2035 from Staphylococcus haemolyticus (strain JCSC1435).